A 498-amino-acid chain; its full sequence is ATP synthase subunit beta, chloroplastic (498 aa).

ATP is bound at residue 172-179 (GGAGVGKT).

This sequence belongs to the ATPase alpha/beta chains family. As to quaternary structure, F-type ATPases have 2 components, CF(1) - the catalytic core - and CF(0) - the membrane proton channel. CF(1) has five subunits: alpha(3), beta(3), gamma(1), delta(1), epsilon(1). CF(0) has four main subunits: a(1), b(1), b'(1) and c(9-12).

It localises to the plastid. The protein resides in the chloroplast thylakoid membrane. It catalyses the reaction ATP + H2O + 4 H(+)(in) = ADP + phosphate + 5 H(+)(out). Its function is as follows. Produces ATP from ADP in the presence of a proton gradient across the membrane. The catalytic sites are hosted primarily by the beta subunits. The polypeptide is ATP synthase subunit beta, chloroplastic (Daucus carota (Wild carrot)).